The chain runs to 637 residues: Early transcription factor 70 kDa subunit (637 aa).

The Helicase ATP-binding domain occupies 32-185 (RTIIDENRSV…GHIIDLMSEE (154 aa)). 45–52 (HIMGSGKT) is a binding site for ATP. Positions 135 to 138 (DKAH) match the DEXH box motif. Residues 327 to 507 (KFKYFINRIQ…VLPFDIKKLL (181 aa)) enclose the Helicase C-terminal domain.

This sequence belongs to the helicase family. VETF subfamily. Heterodimer of a 70 kDa and a 82 kDa subunit. Part of the early transcription complex composed of ETF, RAP94/OPG109, and the DNA-directed RNA polymerase.

It is found in the virion. Its function is as follows. Acts with RNA polymerase to initiate transcription from early gene promoters. Is recruited by the RPO-associated protein of 94 kDa RAP94/OPG109 to form the early transcription complex, which also contains the core RNA polymerase. ETF heterodimer binds to early gene promoters. The sequence is that of Early transcription factor 70 kDa subunit (OPG118) from Homo sapiens (Human).